We begin with the raw amino-acid sequence, 875 residues long: Neurotrypsin (875 aa).

The N-terminal stretch at M1–G20 is a signal peptide. N26 carries an N-linked (GlcNAc...) asparagine glycan. The tract at residues L29–P88 is disordered. The span at Y43–P53 shows a compositional bias: low complexity. Pro residues predominate over residues T56–A71. The Kringle domain maps to C93–C165. 20 disulfide bridges follow: C93–C165, C109–C149, C138–C163, C195–C259, C208–C269, C239–C249, C305–C369, C318–C379, C349–C359, C412–C475, C425–C485, C455–C465, C525–C589, C538–C599, C569–C579, C619–C750, C661–C677, C765–C831, C794–C808, and C821–C850. SRCR domains follow at residues V170–F271, I280–P381, I387–P487, and V500–Y601. The zymogen activation region stretch occupies residues C619–R630. The region spanning I631–K874 is the Peptidase S1 domain. The active-site Charge relay system is H676. A glycan (N-linked (GlcNAc...) asparagine) is linked at N683. D726 functions as the Charge relay system in the catalytic mechanism. The active-site Charge relay system is the S825.

Belongs to the peptidase S1 family.

It localises to the secreted. In terms of biological role, plays a role in neuronal plasticity and the proteolytic action may subserve structural reorganizations associated with learning and memory operations. The sequence is that of Neurotrypsin (PRSS12) from Pan troglodytes (Chimpanzee).